The chain runs to 575 residues: Urease subunit alpha (575 aa).

The Urease domain maps to 138 to 575 (GAVDCHVHLI…LPMTQRYFLF (438 aa)). Residues His-143, His-145, and Lys-226 each coordinate Ni(2+). Lys-226 carries the N6-carboxylysine modification. His-228 contacts substrate. Residues His-255 and His-281 each contribute to the Ni(2+) site. His-329 functions as the Proton donor in the catalytic mechanism. Asp-369 is a binding site for Ni(2+).

The protein belongs to the metallo-dependent hydrolases superfamily. Urease alpha subunit family. In terms of assembly, heterotrimer of UreA (gamma), UreB (beta) and UreC (alpha) subunits. Three heterotrimers associate to form the active enzyme. Ni cation is required as a cofactor. In terms of processing, carboxylation allows a single lysine to coordinate two nickel ions.

The protein resides in the cytoplasm. It carries out the reaction urea + 2 H2O + H(+) = hydrogencarbonate + 2 NH4(+). It participates in nitrogen metabolism; urea degradation; CO(2) and NH(3) from urea (urease route): step 1/1. This chain is Urease subunit alpha, found in Frankia casuarinae (strain DSM 45818 / CECT 9043 / HFP020203 / CcI3).